A 232-amino-acid polypeptide reads, in one-letter code: Protein FAM228B (232 aa).

The protein belongs to the FAM228 family.

This chain is Protein FAM228B (Fam228b), found in Mus musculus (Mouse).